We begin with the raw amino-acid sequence, 88 residues long: DNA-directed RNA polymerase subunit omega (88 aa).

Belongs to the RNA polymerase subunit omega family. The RNAP catalytic core consists of 2 alpha, 1 beta, 1 beta' and 1 omega subunit. When a sigma factor is associated with the core the holoenzyme is formed, which can initiate transcription.

It catalyses the reaction RNA(n) + a ribonucleoside 5'-triphosphate = RNA(n+1) + diphosphate. Promotes RNA polymerase assembly. Latches the N- and C-terminal regions of the beta' subunit thereby facilitating its interaction with the beta and alpha subunits. The chain is DNA-directed RNA polymerase subunit omega from Thermobifida fusca (strain YX).